Reading from the N-terminus, the 467-residue chain is 3-isopropylmalate dehydratase large subunit (467 aa).

Positions 347, 407, and 410 each coordinate [4Fe-4S] cluster.

It belongs to the aconitase/IPM isomerase family. LeuC type 1 subfamily. As to quaternary structure, heterodimer of LeuC and LeuD. It depends on [4Fe-4S] cluster as a cofactor.

The enzyme catalyses (2R,3S)-3-isopropylmalate = (2S)-2-isopropylmalate. It participates in amino-acid biosynthesis; L-leucine biosynthesis; L-leucine from 3-methyl-2-oxobutanoate: step 2/4. In terms of biological role, catalyzes the isomerization between 2-isopropylmalate and 3-isopropylmalate, via the formation of 2-isopropylmaleate. In Synechococcus sp. (strain JA-2-3B'a(2-13)) (Cyanobacteria bacterium Yellowstone B-Prime), this protein is 3-isopropylmalate dehydratase large subunit.